Here is a 70-residue protein sequence, read N- to C-terminus: Small ribosomal subunit protein bS21 (70 aa).

Belongs to the bacterial ribosomal protein bS21 family.

This chain is Small ribosomal subunit protein bS21, found in Nitratiruptor sp. (strain SB155-2).